Consider the following 211-residue polypeptide: ATP phosphoribosyltransferase (211 aa).

This sequence belongs to the ATP phosphoribosyltransferase family. Short subfamily. As to quaternary structure, heteromultimer composed of HisG and HisZ subunits.

Its subcellular location is the cytoplasm. It catalyses the reaction 1-(5-phospho-beta-D-ribosyl)-ATP + diphosphate = 5-phospho-alpha-D-ribose 1-diphosphate + ATP. It participates in amino-acid biosynthesis; L-histidine biosynthesis; L-histidine from 5-phospho-alpha-D-ribose 1-diphosphate: step 1/9. In terms of biological role, catalyzes the condensation of ATP and 5-phosphoribose 1-diphosphate to form N'-(5'-phosphoribosyl)-ATP (PR-ATP). Has a crucial role in the pathway because the rate of histidine biosynthesis seems to be controlled primarily by regulation of HisG enzymatic activity. The protein is ATP phosphoribosyltransferase of Pseudomonas putida (strain W619).